Reading from the N-terminus, the 1044-residue chain is Phosphatidylinositol 4,5-bisphosphate 3-kinase catalytic subunit delta isoform (1044 aa).

The PI3K-ABD domain maps to 16 to 105 (ENQSVVVDFL…LPVLRLVARE (90 aa)). Positions 187–278 (NRALLVNVKF…GLTPHLTMVH (92 aa)) constitute a PI3K-RBD domain. Residues 287-312 (DEQSNPAPQVQKPRAKPPPIPAKKPS) are disordered. One can recognise a C2 PI3K-type domain in the interval 319–476 (LEQPFRIELI…SAAALLICLP (158 aa)). The PIK helical domain occupies 497-674 (HSECVHVTEE…GLILEAYCRG (178 aa)). Phosphotyrosine is present on tyrosine 524. In terms of domain architecture, PI3K/PI4K catalytic spans 745–1027 (CVEQCTFMDS…KFNEALRESW (283 aa)). The tract at residues 751–757 (FMDSKMK) is G-loop. Positions 890–898 (GIGDRHSDN) are catalytic loop. Residues 909-935 (HIDFGHFLGNFKTKFGINRERVPFILT) are activation loop. Serine 1039 carries the phosphoserine; by autocatalysis modification.

This sequence belongs to the PI3/PI4-kinase family. In terms of assembly, heterodimer of a catalytic subunit PIK3CD and a p85 regulatory subunit (PIK3R1, PIK3R2 or PIK3R3). Interacts with ERAS. Interacts with HRAS. In terms of processing, autophosphorylation on Ser-1039 results in the almost complete inactivation of the lipid kinase activity. In humans, the highest levels of expression are seen in peripheral blood mononuclear cells, spleen, and thymus, and low levels of expression in testes, uterus, colon, and small intestine but not in other tissues examined including prostate, heart, brain, and liver. Isoform 2 is expressed in normal thymus, lung and spleen tissues, and is detected at low levels in normal lysates from colon and ovarian biopsies, at elevated levels in lysates from colorectal tumors and is abundantly expressed in some ovarian tumors (at protein level). Both isoform 1 and isoform 2 are widely expressed. Isoform 1 is expressed predominantly in leukocytes.

Its subcellular location is the cytoplasm. The enzyme catalyses a 1,2-diacyl-sn-glycero-3-phospho-(1D-myo-inositol-4,5-bisphosphate) + ATP = a 1,2-diacyl-sn-glycero-3-phospho-(1D-myo-inositol-3,4,5-trisphosphate) + ADP + H(+). It catalyses the reaction a 1,2-diacyl-sn-glycero-3-phospho-(1D-myo-inositol) + ATP = a 1,2-diacyl-sn-glycero-3-phospho-(1D-myo-inositol-3-phosphate) + ADP + H(+). The catalysed reaction is 1-octadecanoyl-2-(5Z,8Z,11Z,14Z)-eicosatetraenoyl-sn-glycero-3-phospho-1D-myo-inositol 4,5-bisphosphate + ATP = 1-octadecanoyl-2-(5Z,8Z,11Z,14Z-eicosatetraenoyl)-sn-glycero-3-phospho-(1D-myo-inositol 3,4,5-triphosphate) + ADP + H(+). The protein operates within phospholipid metabolism; phosphatidylinositol phosphate biosynthesis. Activated by growth factors and cytokine receptors through a tyrosine-kinase-dependent mechanism. Activated by RAS. IC87114 inhibits lipid kinase activity and is selective in cells at doses up to 5-10 uM. IC87114 blocks T-cell receptor signaling in naive and memory T-cells and reduces cytokine production by memory T-cells. In terms of biological role, phosphoinositide-3-kinase (PI3K) phosphorylates phosphatidylinositol (PI) and its phosphorylated derivatives at position 3 of the inositol ring to produce 3-phosphoinositides. Uses ATP and PtdIns(4,5)P2 (phosphatidylinositol 4,5-bisphosphate) to generate phosphatidylinositol 3,4,5-trisphosphate (PIP3). PIP3 plays a key role by recruiting PH domain-containing proteins to the membrane, including AKT1 and PDPK1, activating signaling cascades involved in cell growth, survival, proliferation, motility and morphology. Mediates immune responses. Plays a role in B-cell development, proliferation, migration, and function. Required for B-cell receptor (BCR) signaling. Mediates B-cell proliferation response to anti-IgM, anti-CD40 and IL4 stimulation. Promotes cytokine production in response to TLR4 and TLR9. Required for antibody class switch mediated by TLR9. Involved in the antigen presentation function of B-cells. Involved in B-cell chemotaxis in response to CXCL13 and sphingosine 1-phosphate (S1P). Required for proliferation, signaling and cytokine production of naive, effector and memory T-cells. Required for T-cell receptor (TCR) signaling. Mediates TCR signaling events at the immune synapse. Activation by TCR leads to antigen-dependent memory T-cell migration and retention to antigenic tissues. Together with PIK3CG participates in T-cell development. Contributes to T-helper cell expansion and differentiation. Required for T-cell migration mediated by homing receptors SELL/CD62L, CCR7 and S1PR1 and antigen dependent recruitment of T-cells. Together with PIK3CG is involved in natural killer (NK) cell development and migration towards the sites of inflammation. Participates in NK cell receptor activation. Plays a role in NK cell maturation and cytokine production. Together with PIK3CG is involved in neutrophil chemotaxis and extravasation. Together with PIK3CG participates in neutrophil respiratory burst. Plays important roles in mast-cell development and mast cell mediated allergic response. Involved in stem cell factor (SCF)-mediated proliferation, adhesion and migration. Required for allergen-IgE-induced degranulation and cytokine release. The lipid kinase activity is required for its biological function. Isoform 2 may be involved in stabilizing total RAS levels, resulting in increased ERK phosphorylation and increased PI3K activity. The sequence is that of Phosphatidylinositol 4,5-bisphosphate 3-kinase catalytic subunit delta isoform (PIK3CD) from Homo sapiens (Human).